Consider the following 593-residue polypeptide: Aspartate--tRNA(Asp/Asn) ligase (593 aa).

L-aspartate is bound at residue E176. Residues 200-203 (QIFK) are aspartate. R222 contributes to the L-aspartate binding site. ATP contacts are provided by residues 222–224 (RDE) and Q231. H450 serves as a coordination point for L-aspartate. Residue E490 coordinates ATP. R497 lines the L-aspartate pocket. 542–545 (GLDR) contributes to the ATP binding site.

Belongs to the class-II aminoacyl-tRNA synthetase family. Type 1 subfamily. In terms of assembly, homodimer.

The protein localises to the cytoplasm. It catalyses the reaction tRNA(Asx) + L-aspartate + ATP = L-aspartyl-tRNA(Asx) + AMP + diphosphate. In terms of biological role, aspartyl-tRNA synthetase with relaxed tRNA specificity since it is able to aspartylate not only its cognate tRNA(Asp) but also tRNA(Asn). Reaction proceeds in two steps: L-aspartate is first activated by ATP to form Asp-AMP and then transferred to the acceptor end of tRNA(Asp/Asn). The polypeptide is Aspartate--tRNA(Asp/Asn) ligase (Symbiobacterium thermophilum (strain DSM 24528 / JCM 14929 / IAM 14863 / T)).